Reading from the N-terminus, the 123-residue chain is Small ribosomal subunit protein uS12 (123 aa).

The segment at 1–28 (MPTIQQLIRTERSKVQKKTKSPALKQCP) is disordered. Asp89 carries the post-translational modification 3-methylthioaspartic acid. Residues 104-123 (ATGVKDRKQGRSKYGTKRPK) form a disordered region. Positions 113–123 (GRSKYGTKRPK) are enriched in basic residues.

This sequence belongs to the universal ribosomal protein uS12 family. As to quaternary structure, part of the 30S ribosomal subunit. Contacts proteins S8 and S17. May interact with IF1 in the 30S initiation complex.

Its function is as follows. With S4 and S5 plays an important role in translational accuracy. Functionally, interacts with and stabilizes bases of the 16S rRNA that are involved in tRNA selection in the A site and with the mRNA backbone. Located at the interface of the 30S and 50S subunits, it traverses the body of the 30S subunit contacting proteins on the other side and probably holding the rRNA structure together. The combined cluster of proteins S8, S12 and S17 appears to hold together the shoulder and platform of the 30S subunit. The protein is Small ribosomal subunit protein uS12 of Gloeothece citriformis (strain PCC 7424) (Cyanothece sp. (strain PCC 7424)).